A 302-amino-acid chain; its full sequence is Oxygen-dependent coproporphyrinogen-III oxidase (302 aa).

Ser94 serves as a coordination point for substrate. His98 and His108 together coordinate a divalent metal cation. The active-site Proton donor is His108. Residue 110–112 (NVR) participates in substrate binding. A divalent metal cation-binding residues include His147 and His177. Residues 242-277 (YVEFNLVYDRGTIFGLQSGGRTESILMSLPPLVRWD) form an important for dimerization region. Position 260 to 262 (260 to 262 (GGR)) interacts with substrate.

It belongs to the aerobic coproporphyrinogen-III oxidase family. Homodimer. The cofactor is a divalent metal cation.

The protein resides in the cytoplasm. The catalysed reaction is coproporphyrinogen III + O2 + 2 H(+) = protoporphyrinogen IX + 2 CO2 + 2 H2O. It participates in porphyrin-containing compound metabolism; protoporphyrin-IX biosynthesis; protoporphyrinogen-IX from coproporphyrinogen-III (O2 route): step 1/1. Functionally, involved in the heme biosynthesis. Catalyzes the aerobic oxidative decarboxylation of propionate groups of rings A and B of coproporphyrinogen-III to yield the vinyl groups in protoporphyrinogen-IX. In Alcanivorax borkumensis (strain ATCC 700651 / DSM 11573 / NCIMB 13689 / SK2), this protein is Oxygen-dependent coproporphyrinogen-III oxidase.